Consider the following 389-residue polypeptide: 1-deoxy-D-xylulose 5-phosphate reductoisomerase (389 aa).

NADPH-binding residues include Ser11, Gly12, Ser13, Val14, Asn39, and Asn122. Lys123 contributes to the 1-deoxy-D-xylulose 5-phosphate binding site. Glu124 is a binding site for NADPH. Asp148 is a Mn(2+) binding site. Ser149, Glu150, Ser174, and His197 together coordinate 1-deoxy-D-xylulose 5-phosphate. Residue Glu150 coordinates Mn(2+). An NADPH-binding site is contributed by Gly203. Residues Ser210, Asn215, Lys216, and Glu219 each contribute to the 1-deoxy-D-xylulose 5-phosphate site. Glu219 is a binding site for Mn(2+).

It belongs to the DXR family. Mg(2+) is required as a cofactor. Mn(2+) serves as cofactor.

The enzyme catalyses 2-C-methyl-D-erythritol 4-phosphate + NADP(+) = 1-deoxy-D-xylulose 5-phosphate + NADPH + H(+). It functions in the pathway isoprenoid biosynthesis; isopentenyl diphosphate biosynthesis via DXP pathway; isopentenyl diphosphate from 1-deoxy-D-xylulose 5-phosphate: step 1/6. Catalyzes the NADPH-dependent rearrangement and reduction of 1-deoxy-D-xylulose-5-phosphate (DXP) to 2-C-methyl-D-erythritol 4-phosphate (MEP). This Leptospira borgpetersenii serovar Hardjo-bovis (strain JB197) protein is 1-deoxy-D-xylulose 5-phosphate reductoisomerase.